The primary structure comprises 269 residues: 4-hydroxy-tetrahydrodipicolinate reductase (269 aa).

NAD(+) is bound by residues 8 to 13 and glutamate 34; that span reads GAGGRM. Arginine 35 is a binding site for NADP(+). NAD(+) is bound by residues 98–100 and 122–125; these read GTT and ASNY. Residue histidine 155 is the Proton donor/acceptor of the active site. A (S)-2,3,4,5-tetrahydrodipicolinate-binding site is contributed by histidine 156. The active-site Proton donor is lysine 159. 165–166 contributes to the (S)-2,3,4,5-tetrahydrodipicolinate binding site; it reads GT.

This sequence belongs to the DapB family.

The protein localises to the cytoplasm. The enzyme catalyses (S)-2,3,4,5-tetrahydrodipicolinate + NAD(+) + H2O = (2S,4S)-4-hydroxy-2,3,4,5-tetrahydrodipicolinate + NADH + H(+). The catalysed reaction is (S)-2,3,4,5-tetrahydrodipicolinate + NADP(+) + H2O = (2S,4S)-4-hydroxy-2,3,4,5-tetrahydrodipicolinate + NADPH + H(+). Its pathway is amino-acid biosynthesis; L-lysine biosynthesis via DAP pathway; (S)-tetrahydrodipicolinate from L-aspartate: step 4/4. Functionally, catalyzes the conversion of 4-hydroxy-tetrahydrodipicolinate (HTPA) to tetrahydrodipicolinate. In Haemophilus ducreyi (strain 35000HP / ATCC 700724), this protein is 4-hydroxy-tetrahydrodipicolinate reductase.